A 1804-amino-acid polypeptide reads, in one-letter code: Collagen alpha-1(XI) chain (1804 aa).

The N-terminal stretch at 1 to 34 is a signal peptide; the sequence is MEPWSRWKTKRWIWDLTISTLALTFLFQAREVRG. A propeptide spans 35-511 (N-terminal propeptide); that stretch reads AAPVDILKAL…SKGPTISAQE (477 aa). 2 disulfide bridges follow: Cys60–Cys242 and Cys181–Cys235. A Laminin G-like domain is found at 70–242; it reads DVAYRVTEEA…DYCDHYSPDC (173 aa). Residues 229–417 form a nonhelical region region; it reads KAAYDYCDHY…DFTETSINGH (189 aa). Over residues 315–329 the composition is skewed to polar residues; sequence YQTETPRRVSGSNEP. 2 disordered regions span residues 315–334 and 433–506; these read YQTE…PVEE and EPGM…KGPT. Residues 418–506 form a triple-helical region (interrupted) region; that stretch reads GAYGEKGQKG…YGGDGSKGPT (89 aa). One can recognise a Collagen-like 1 domain in the interval 440–488; sequence GPPGPAGPAGLMGPPGLQGPSGLPGDPGDRGPPGRPGLPGADGLPGPPG. Composition is skewed to low complexity over residues 447-465 and 477-494; these read PAGL…LPGD and LPGA…LMLP. Positions 507-509 are short nonhelical segment; sequence ISA. Residues 510–527 are telopeptide; sequence QEAQAQAILQQARIALRG. A disordered region spans residues 526–1567; that stretch reads RGPPGPMGLT…SIQGDAGDNI (1042 aa). 2 consecutive Collagen-like domains span residues 527-584 and 567-623; these read GPPG…GADG and PPGP…GPPG. The interval 528 to 1540 is triple-helical region; it reads PPGPMGLTGR…PGPPGPPGEV (1013 aa). Composition is skewed to gly residues over residues 539–548 and 581–590; these read GPVGGPGSAG and GADGGRGMPG. Lys610 bears the Allysine mark. A compositionally biased stretch (low complexity) spans 639–655; sequence PRGLPGEAGPRGLLGPR. The span at 697-708 shows a compositional bias: pro residues; sequence QGLPGPQGPIGP. Residues 715-726 are compositionally biased toward low complexity; it reads QGKPGLAGLPGA. The Collagen-like 4 domain maps to 728 to 781; that stretch reads GPPGHPGKEGQSGEKGALGPPGPQGPIGYPGPRGVKGADGVRGLKGSKGEKGED. The segment covering 805 to 814 has biased composition (basic and acidic residues); it reads RGEDGPEGPK. Low complexity-rich tracts occupy residues 873–901, 916–925, and 969–979; these read KPGP…PGPK, RGPQGPQGPV, and PQGPTGETGPI. Gly residues predominate over residues 1040–1049; it reads GLKGGEGPQG. A compositionally biased stretch (pro residues) spans 1074-1083; it reads RPGPQGPPGP. A compositionally biased stretch (low complexity) spans 1084-1108; the sequence is AGEKGAPGEKGPQGPAGRDGVQGPV. The segment covering 1160 to 1169 has biased composition (gly residues); that stretch reads GIAGGDGEPG. Pro residues predominate over residues 1216–1227; sequence MGPPGPPGPRGP. Composition is skewed to low complexity over residues 1240–1249 and 1282–1296; these read PGSIGSVGVV and AGPP…IKGP. Residues 1341–1360 show a composition bias toward pro residues; it reads QPGPPGPSGEAGPPGPPGKR. 2 stretches are compositionally biased toward low complexity: residues 1383-1392 and 1417-1426; these read AEGPPGKTGP and QGLPGAAGQD. Collagen-like domains are found at residues 1427-1482 and 1481-1539; these read GPPG…SPGA and GAKG…PPGE. Over residues 1428–1437 the composition is skewed to pro residues; that stretch reads PPGPLGPPGL. Lys1450 is modified (allysine). A compositionally biased stretch (low complexity) spans 1453–1462; sequence PGLIGLIGPP. The segment covering 1481-1490 has biased composition (gly residues); that stretch reads GAKGDGGIPG. A compositionally biased stretch (pro residues) spans 1491-1507; the sequence is PAGPIGPPGPPGLPGPA. The segment covering 1509–1519 has biased composition (low complexity); the sequence is PKGNKGSSGPT. The segment covering 1528 to 1537 has biased composition (pro residues); the sequence is PGPPGPPGPP. The tract at residues 1541-1561 is nonhelical region (C-terminal); that stretch reads IQPLPILSPKKTRRHTESIQG. Positions 1562 to 1804 are cleaved as a propeptide — C-terminal propeptide; the sequence is DAGDNILDYS…FEVGPACFLG (243 aa). The 229-residue stretch at 1575–1803 folds into the Fibrillar collagen NC1 domain; that stretch reads EEIFGSLNSL…GFEVGPACFL (229 aa). Cys1605 and Cys1637 are joined by a disulfide. 5 residues coordinate Ca(2+): Asp1623, Asn1625, Gln1626, Cys1628, and Asp1631. Asn1638 is a glycosylation site (N-linked (GlcNAc...) asparagine). 2 disulfides stabilise this stretch: Cys1646–Cys1801 and Cys1712–Cys1755.

Belongs to the fibrillar collagen family. Trimers composed of three different chains: alpha 1(XI), alpha 2(XI), and alpha 3(XI). Alpha 3(XI) is a post-translational modification of alpha 1(II). Alpha 1(V) can also be found instead of alpha 3(XI)=1(II). In terms of processing, prolines at the third position of the tripeptide repeating unit (G-X-Y) are hydroxylated in some or all of the chains. Post-translationally, N-glycosylated.

The protein localises to the secreted. Its subcellular location is the extracellular space. It localises to the extracellular matrix. May play an important role in fibrillogenesis by controlling lateral growth of collagen II fibrils. The chain is Collagen alpha-1(XI) chain (Col11a1) from Mus musculus (Mouse).